We begin with the raw amino-acid sequence, 344 residues long: N-acetyl-gamma-glutamyl-phosphate reductase (344 aa).

Residue Cys150 is part of the active site.

This sequence belongs to the NAGSA dehydrogenase family. Type 1 subfamily.

It localises to the cytoplasm. It catalyses the reaction N-acetyl-L-glutamate 5-semialdehyde + phosphate + NADP(+) = N-acetyl-L-glutamyl 5-phosphate + NADPH + H(+). The protein operates within amino-acid biosynthesis; L-arginine biosynthesis; N(2)-acetyl-L-ornithine from L-glutamate: step 3/4. Its function is as follows. Catalyzes the NADPH-dependent reduction of N-acetyl-5-glutamyl phosphate to yield N-acetyl-L-glutamate 5-semialdehyde. The protein is N-acetyl-gamma-glutamyl-phosphate reductase of Pseudomonas fluorescens (strain SBW25).